A 447-amino-acid polypeptide reads, in one-letter code: Cytochrome P450 BJ-4 (447 aa).

A heme-binding site is contributed by Cys-392.

Belongs to the cytochrome P450 family. Requires heme as cofactor.

In terms of biological role, cytochromes P450 are a group of heme-thiolate monooxygenases. They oxidize a variety of structurally unrelated compounds, including steroids, fatty acids, and xenobiotics. The protein is Cytochrome P450 BJ-4 (cyp117) of Bradyrhizobium diazoefficiens (strain JCM 10833 / BCRC 13528 / IAM 13628 / NBRC 14792 / USDA 110).